Here is a 441-residue protein sequence, read N- to C-terminus: Tol-Pal system protein TolB (441 aa).

An N-terminal signal peptide occupies residues 1 to 39 (MPAMTPAFRRADLTGFLRTYGAALILLLAAMLAWQPAQA).

It belongs to the TolB family. As to quaternary structure, the Tol-Pal system is composed of five core proteins: the inner membrane proteins TolA, TolQ and TolR, the periplasmic protein TolB and the outer membrane protein Pal. They form a network linking the inner and outer membranes and the peptidoglycan layer.

It localises to the periplasm. Its function is as follows. Part of the Tol-Pal system, which plays a role in outer membrane invagination during cell division and is important for maintaining outer membrane integrity. This chain is Tol-Pal system protein TolB, found in Bordetella parapertussis (strain 12822 / ATCC BAA-587 / NCTC 13253).